A 685-amino-acid chain; its full sequence is Sulfate transporter 4.1, chloroplastic (685 aa).

Residues Met1–Ser23 constitute a chloroplast transit peptide. Positions Val15–Leu26 are enriched in low complexity. The interval Val15–Ser53 is disordered. 12 helical membrane passes run Leu97–Ala117, Leu122–Gly142, Leu147–Ala167, Ile175–Leu195, Phe203–Ser223, Trp255–Gly275, Phe283–Phe303, Thr332–Ala352, Leu369–Gly389, Leu406–Phe426, Leu434–Leu454, and Leu473–Ile493. Positions Gln518–Cys642 constitute an STAS domain.

This sequence belongs to the SLC26A/SulP transporter (TC 2.A.53) family. In terms of tissue distribution, expressed both in roots and leaves.

The protein resides in the plastid. It localises to the chloroplast membrane. Its function is as follows. H(+)/sulfate cotransporter that may play a role in the regulation of sulfate assimilation. This chain is Sulfate transporter 4.1, chloroplastic (SULTR4;1), found in Arabidopsis thaliana (Mouse-ear cress).